We begin with the raw amino-acid sequence, 4265 residues long: Dynein axonemal heavy chain 1 (4265 aa).

A disordered region spans residues 1 to 88 (MEQPNSKGYS…KSPLTGTDKK (88 aa)). The interval 1–1542 (MEQPNSKGYS…YIRAVNAEFI (1542 aa)) is stem. The segment covering 60–69 (PHLPLPPAPP) has biased composition (pro residues). 4 AAA regions span residues 1543 to 1764 (YGYE…VISA), 1824 to 2057 (EAIR…SSVK), 2189 to 2449 (TMVP…VFQG), and 2547 to 2799 (DYNQ…LTRH). Residues 1581–1588 (GPAGTGKT) carry the GPAGTGKT motif motif. 1581–1588 (GPAGTGKT) serves as a coordination point for ATP. The short motif at 1631 to 1637 (CFDEFNR) is the CFDEFNR motif element. ATP-binding positions include 1862-1869 (GPTGSGKS), 2227-2234 (GPTGTGKT), and 2586-2593 (GVGGSGRS). Residues 2814–3112 (FSILIGQKKL…EELELKCEQC (299 aa)) are stalk. Positions 3074–3122 (LDEAKQRLREVEDGIATMQAKYRECITKKEELELKCEQCEQRLGRAGKL) form a coiled coil. AAA regions lie at residues 3197–3427 (LGNP…EIQA) and 3640–3859 (MQDF…QLKM).

It belongs to the dynein heavy chain family. As to quaternary structure, consists of at least two heavy chains and a number of intermediate and light chains. Expressed primarily in trachea and testis, 2 tissues containing axonemal structures. Also expressed in brain.

The protein localises to the cytoplasm. It localises to the cytoskeleton. The protein resides in the cilium axoneme. It is found in the cell projection. Its subcellular location is the cilium. The protein localises to the flagellum. Its function is as follows. Force generating protein of cilia required for sperm flagellum motility. Produces force towards the minus ends of microtubules. Dynein has ATPase activity; the force-producing power stroke is thought to occur on release of ADP. Required in spermatozoa for the formation of the inner dynein arms and biogenesis of the axoneme. The sequence is that of Dynein axonemal heavy chain 1 from Homo sapiens (Human).